Here is a 147-residue protein sequence, read N- to C-terminus: MKRKTLPLLALVATSLFLSACDDRSDDLKAISKFKDLTPPRFSDVVSRQDDVSEEWSQVGFSSGLTLQVLRTRESPDGCEGGSYYYLVDMEEKTVQPLMNALCIADNIKLEYHEVTDPYTKEKYFEYSHDGKLMGRLLIPSNPDNRE.

Residues 1–20 form the signal peptide; that stretch reads MKRKTLPLLALVATSLFLSA. A lipid anchor (N-palmitoyl cysteine) is attached at cysteine 21. The S-diacylglycerol cysteine moiety is linked to residue cysteine 21.

The protein to E.coli YafY.

The protein localises to the cell inner membrane. Functionally, does not induce degP when overexpressed unless it is mutated to resemble YafY. The sequence is that of Lipoprotein YfjS (yfjS) from Escherichia coli (strain K12).